Consider the following 946-residue polypeptide: Clumping factor A (946 aa).

Residues 1 to 39 form the signal peptide; sequence MNMKKKEKHAIRKKSIGVASVLVGTLIGFGLLSSKEADA. The YSIRK-G/S signaling motif motif lies at 9 to 20; sequence HAIRKKSIGVAS. Disordered regions lie at residues 34-199 and 528-917; these read SKEA…SNKD and FNNG…SEDE. Positions 40-542 are ligand binding A region; sequence SENSVTQSDS…GSGDGIDKPV (503 aa). Residues 47 to 65 are compositionally biased toward low complexity; the sequence is SDSASNESKSNDSSSVSAA. Residues 71–111 show a composition bias toward polar residues; it reads TNVSDTKTSSNTNNGETSVAQNPAQQETTQSALTNATTEET. Low complexity-rich tracts occupy residues 117 to 131 and 142 to 161; these read ATTA…ATTQ and NQTS…SVNS. Over residues 162 to 199 the composition is skewed to polar residues; sequence PQNSTNAENVSTTQDTSTEATPSNNESAPQSTDASNKD. The span at 546–564 shows a compositional bias: acidic residues; it reads QPDEPGEIEPIPEDSDSDP. The span at 565-597 shows a compositional bias: low complexity; sequence GSDSGSDSNSDSGSDSGSDSTSDSGSDSASDSD. The span at 598–874 shows a compositional bias: acidic residues; the sequence is SASDSDSASD…DSDSESDSNS (277 aa). The span at 875-893 shows a compositional bias: low complexity; it reads DSESGSNNNVVPPNSPKNG. Over residues 900-909 the composition is skewed to basic and acidic residues; that stretch reads NEAKDSKEPL. The short motif at 909-913 is the LPXTG sorting signal element; it reads LPDTG. Pentaglycyl murein peptidoglycan amidated threonine is present on Thr-912. Residues 913 to 946 constitute a propeptide, removed by sortase; sequence GSEDEANTSLIWGLLASIGSLLLFRRKKENKDKK.

This sequence belongs to the serine-aspartate repeat-containing protein (SDr) family.

It is found in the secreted. Its subcellular location is the cell wall. Its function is as follows. Cell surface-associated protein implicated in virulence. Promotes bacterial attachment exclusively to the gamma-chain of human fibrinogen. Induces formation of bacterial clumps. This is Clumping factor A (clfA) from Staphylococcus aureus (strain MW2).